The chain runs to 78 residues: RNA-binding protein Hfq (78 aa).

The 60-residue stretch at 10 to 69 (DPFLNTLRKEHVPVSIYLVNGIKLQGQIESFDQYVVLLRNTVTQMVYKHAISTVVPARAV) folds into the Sm domain.

This sequence belongs to the Hfq family. As to quaternary structure, homohexamer.

RNA chaperone that binds small regulatory RNA (sRNAs) and mRNAs to facilitate mRNA translational regulation in response to envelope stress, environmental stress and changes in metabolite concentrations. Also binds with high specificity to tRNAs. In Bordetella avium (strain 197N), this protein is RNA-binding protein Hfq.